Consider the following 303-residue polypeptide: MASLKDLRDRIASVKATQKITKAMQMVAAARLHRAQEAAHSARPYAKRMAAILANLANDVDPIDAPSLMRGTGRDDVHLLVVCTAERGLCGAFNVQIARRAREHIKTLLAAGKIVKVLTVGKKGADILSRDYKALMIDHIDLQSIKRVGFAEAAMISQKIVDLFDDDAFDVCTLFYSEFVSVINQRPVAFGLVPMVSSGGAVETAEVEQKIDNSADLQSIVYDYEPDAASLLDVLVPRNLSVQIFRALLENVAGEMGAKMTAMDNASRNAGEMINKLTVAYNRQRQAQITTELIEIIAGAEAL.

It belongs to the ATPase gamma chain family. F-type ATPases have 2 components, CF(1) - the catalytic core - and CF(0) - the membrane proton channel. CF(1) has five subunits: alpha(3), beta(3), gamma(1), delta(1), epsilon(1). CF(0) has three main subunits: a, b and c.

It is found in the cell inner membrane. In terms of biological role, produces ATP from ADP in the presence of a proton gradient across the membrane. The gamma chain is believed to be important in regulating ATPase activity and the flow of protons through the CF(0) complex. This is ATP synthase gamma chain from Bartonella henselae (strain ATCC 49882 / DSM 28221 / CCUG 30454 / Houston 1) (Rochalimaea henselae).